The following is a 178-amino-acid chain: MSRIGKLPIAIPSGVEVKVGTEAVEVKGPKGVLVTPTHTELNYAVEDGHVVITRATETRTARAQHGLRRTLLANCIQGVTKGFSKTLEVIGVGYKVAVKGNLVELAVGFSHPVIMEMPEGVEAKVEGQKLTISGTSKEVVGEIAARIRRVRKPEPYKGKGIKYDNEQIRRKAGKSGGK.

Residues Pro155–Arg169 show a composition bias toward basic and acidic residues. A disordered region spans residues Pro155–Lys178.

This sequence belongs to the universal ribosomal protein uL6 family. In terms of assembly, part of the 50S ribosomal subunit.

In terms of biological role, this protein binds to the 23S rRNA, and is important in its secondary structure. It is located near the subunit interface in the base of the L7/L12 stalk, and near the tRNA binding site of the peptidyltransferase center. This chain is Large ribosomal subunit protein uL6, found in Nitratidesulfovibrio vulgaris (strain DSM 19637 / Miyazaki F) (Desulfovibrio vulgaris).